A 301-amino-acid polypeptide reads, in one-letter code: Cutinase (301 aa).

Positions Met1–Ala40 are cleaved as a signal peptide. Poly(ethylene terephthalate) is bound at residue Tyr100. Ser170 serves as the catalytic Nucleophile. Poly(ethylene terephthalate)-binding residues include Met171 and Trp195. Active-site charge relay system residues include Asp216 and His248. A disulfide bond links Cys281 and Cys299.

Belongs to the AB hydrolase superfamily.

The protein localises to the secreted. It is found in the periplasm. The catalysed reaction is a butanoate ester + H2O = an aliphatic alcohol + butanoate + H(+). It carries out the reaction (ethylene terephthalate)(n) + H2O = (ethylene terephthalate)(n-1) + 4-[(2-hydroxyethoxy)carbonyl]benzoate + H(+). The enzyme catalyses cutin + H2O = cutin monomers.. With respect to regulation, activated by magnesium ions. Activated by calcium ions. Inhibited by the serine hydrolase inhibitor phenylmethanesulfonyl fluoride (PMSF). Functionally, catalyzes the hydrolysis of cutin, a polyester that forms the structure of plant cuticle. Shows esterase activity towards p-nitrophenol-linked aliphatic esters (pNP-aliphatic esters). Also hydrolyzes the triglyceride triolein. Capable of degrading the plastic poly(ethylene terephthalate) (PET), the most abundant polyester plastic in the world. The polypeptide is Cutinase (Thermobifida fusca (strain YX)).